The primary structure comprises 219 residues: Protein ERP1 (219 aa).

The signal sequence occupies residues 1-22; that stretch reads MLLTSLLQVFACCLVLPAQVTA. Residues 23-186 are Lumenal-facing; that stretch reads FYYYTSGAER…RDASEAVNSR (164 aa). A GOLD domain is found at 32 to 131; it reads RKCFHKELSK…KTKIDVEFQV (100 aa). Residues 187–207 traverse the membrane as a helical segment; that stretch reads AMWWIVIQLIVLAVTCGWQMK. The Cytoplasmic segment spans residues 208–219; the sequence is HLGKFFVKQKIL.

The protein belongs to the EMP24/GP25L family. As to quaternary structure, associates with EMP24, ERV25 and ERP2.

The protein resides in the endoplasmic reticulum membrane. Its function is as follows. Involved in vesicular protein trafficking. The sequence is that of Protein ERP1 (ERP1) from Saccharomyces cerevisiae (strain ATCC 204508 / S288c) (Baker's yeast).